The primary structure comprises 369 residues: GTPase Obg (369 aa).

Residues 1 to 158 enclose the Obg domain; sequence MFTDVVELTV…RRIKLDLKLI (158 aa). The tract at residues 126-146 is disordered; it reads NTHFKSSTNQRPTYAQPGEKG. Positions 128-138 are enriched in polar residues; that stretch reads HFKSSTNQRPT. The OBG-type G domain maps to 159–362; the sequence is ADVGLVGFPN…LKHALFNLVQ (204 aa). Residues 165–172, 190–194, 212–215, 280–283, and 343–345 contribute to the GTP site; these read GFPNVGKS, FTTLT, DIPG, TRAD, and SSA. Mg(2+)-binding residues include S172 and T192.

Belongs to the TRAFAC class OBG-HflX-like GTPase superfamily. OBG GTPase family. In terms of assembly, monomer. Mg(2+) serves as cofactor.

It localises to the cytoplasm. In terms of biological role, an essential GTPase which binds GTP, GDP and possibly (p)ppGpp with moderate affinity, with high nucleotide exchange rates and a fairly low GTP hydrolysis rate. Plays a role in control of the cell cycle, stress response, ribosome biogenesis and in those bacteria that undergo differentiation, in morphogenesis control. In Sulfurimonas denitrificans (strain ATCC 33889 / DSM 1251) (Thiomicrospira denitrificans (strain ATCC 33889 / DSM 1251)), this protein is GTPase Obg.